Reading from the N-terminus, the 156-residue chain is Small ribosomal subunit protein uS7 (156 aa).

Belongs to the universal ribosomal protein uS7 family. Part of the 30S ribosomal subunit. Contacts proteins S9 and S11.

In terms of biological role, one of the primary rRNA binding proteins, it binds directly to 16S rRNA where it nucleates assembly of the head domain of the 30S subunit. Is located at the subunit interface close to the decoding center, probably blocks exit of the E-site tRNA. In Lacticaseibacillus casei (strain BL23) (Lactobacillus casei), this protein is Small ribosomal subunit protein uS7.